Consider the following 368-residue polypeptide: Isopentenyl-diphosphate delta-isomerase (368 aa).

7–8 (RK) is a substrate binding site. FMN-binding positions include T65, 66 to 68 (GMT), S96, and N125. 96 to 98 (SQR) provides a ligand contact to substrate. Q160 provides a ligand contact to substrate. E161 contacts Mg(2+). Residues K193, S218, T223, 275 to 277 (GIR), and 296 to 297 (AL) each bind FMN.

It belongs to the IPP isomerase type 2 family. As to quaternary structure, homooctamer. Dimer of tetramers. FMN is required as a cofactor. Requires NADPH as cofactor. Mg(2+) serves as cofactor.

It localises to the cytoplasm. It carries out the reaction isopentenyl diphosphate = dimethylallyl diphosphate. Involved in the biosynthesis of isoprenoids. Catalyzes the 1,3-allylic rearrangement of the homoallylic substrate isopentenyl (IPP) to its allylic isomer, dimethylallyl diphosphate (DMAPP). This chain is Isopentenyl-diphosphate delta-isomerase, found in Saccharolobus shibatae (strain ATCC 51178 / DSM 5389 / JCM 8931 / NBRC 15437 / B12) (Sulfolobus shibatae).